A 109-amino-acid polypeptide reads, in one-letter code: Larval cuticle protein 1 (109 aa).

The N-terminal stretch at 1–14 is a signal peptide; the sequence is MILVALALVALAVA. A Chitin-binding type R&amp;R domain is found at 34 to 107; sequence EGSYQFGFET…AEGSSIPKPA (74 aa).

In terms of biological role, component of the cuticle of the larva of Helicoverpa armigera. The polypeptide is Larval cuticle protein 1 (LCP1) (Helicoverpa armigera (Cotton bollworm)).